The sequence spans 390 residues: Queuine tRNA-ribosyltransferase (390 aa).

The active-site Proton acceptor is the Asp-92. Substrate is bound by residues 92-96 (DSGGF), Asp-146, Gln-195, and Gly-222. Residues 253 to 259 (GVGTPED) are RNA binding. The active-site Nucleophile is the Asp-272. The interval 277–281 (TRNAR) is RNA binding; important for wobble base 34 recognition. Zn(2+) is bound by residues Cys-310, Cys-312, Cys-315, and His-354.

It belongs to the queuine tRNA-ribosyltransferase family. Homodimer. Within each dimer, one monomer is responsible for RNA recognition and catalysis, while the other monomer binds to the replacement base PreQ1. Zn(2+) is required as a cofactor.

It carries out the reaction 7-aminomethyl-7-carbaguanine + guanosine(34) in tRNA = 7-aminomethyl-7-carbaguanosine(34) in tRNA + guanine. It participates in tRNA modification; tRNA-queuosine biosynthesis. Catalyzes the base-exchange of a guanine (G) residue with the queuine precursor 7-aminomethyl-7-deazaguanine (PreQ1) at position 34 (anticodon wobble position) in tRNAs with GU(N) anticodons (tRNA-Asp, -Asn, -His and -Tyr). Catalysis occurs through a double-displacement mechanism. The nucleophile active site attacks the C1' of nucleotide 34 to detach the guanine base from the RNA, forming a covalent enzyme-RNA intermediate. The proton acceptor active site deprotonates the incoming PreQ1, allowing a nucleophilic attack on the C1' of the ribose to form the product. After dissociation, two additional enzymatic reactions on the tRNA convert PreQ1 to queuine (Q), resulting in the hypermodified nucleoside queuosine (7-(((4,5-cis-dihydroxy-2-cyclopenten-1-yl)amino)methyl)-7-deazaguanosine). This chain is Queuine tRNA-ribosyltransferase, found in Acidovorax ebreus (strain TPSY) (Diaphorobacter sp. (strain TPSY)).